The sequence spans 429 residues: Endo-1,4-beta-xylanase 1 (429 aa).

The N-terminal stretch at 1–19 (MQTKSILTAALLAAAPASA) is a signal peptide. A GH10 domain is found at 43–336 (NSDQQYNRIL…KPAWTSISSV (294 aa)). Glu-150 acts as the Proton donor in catalysis. Glu-257 (nucleophile) is an active-site residue. Residues Cys-286 and Cys-292 are joined by a disulfide bond. The tract at residues 364-395 (TTPPPISSPIVPSTTTTSAVPTTTVSPPEPEQ) is disordered. A compositionally biased stretch (low complexity) spans 371 to 389 (SPIVPSTTTTSAVPTTTVS). Positions 393–429 (PEQTRWGQCGGIGWNGPTKCQSPWTCTRLNDWYFQCL) constitute a CBM1 domain.

The protein belongs to the glycosyl hydrolase 10 (cellulase F) family.

The protein resides in the secreted. The enzyme catalyses Endohydrolysis of (1-&gt;4)-beta-D-xylosidic linkages in xylans.. It participates in glycan degradation; xylan degradation. Functionally, endo-1,4-beta-xylanase involved in the hydrolysis of xylan, a major structural heterogeneous polysaccharide found in plant biomass representing the second most abundant polysaccharide in the biosphere, after cellulose. This chain is Endo-1,4-beta-xylanase 1, found in Humicola insolens (Soft-rot fungus).